The following is a 323-amino-acid chain: Methenyltetrahydromethanopterin cyclohydrolase (323 aa).

Belongs to the MCH family.

It localises to the cytoplasm. It catalyses the reaction 5,10-methenyl-5,6,7,8-tetrahydromethanopterin + H2O = N(5)-formyl-5,6,7,8-tetrahydromethanopterin + H(+). It functions in the pathway one-carbon metabolism; methanogenesis from CO(2); 5,10-methenyl-5,6,7,8-tetrahydromethanopterin from CO(2): step 3/3. In terms of biological role, catalyzes the reversible interconversion of 5-formyl-H(4)MPT to methenyl-H(4)MPT(+). In Methanococcus maripaludis (strain C5 / ATCC BAA-1333), this protein is Methenyltetrahydromethanopterin cyclohydrolase.